Reading from the N-terminus, the 369-residue chain is Putative agmatine deiminase (369 aa).

Catalysis depends on C355, which acts as the Amidino-cysteine intermediate.

This sequence belongs to the agmatine deiminase family.

The catalysed reaction is agmatine + H2O = N-carbamoylputrescine + NH4(+). This Marinomonas sp. (strain MWYL1) protein is Putative agmatine deiminase.